Reading from the N-terminus, the 338-residue chain is NAD kinase (338 aa).

The active-site Proton acceptor is the Asp66. NAD(+) contacts are provided by residues 66 to 67 (DG), Arg71, 141 to 142 (ND), Lys152, Asp171, 182 to 187 (TAYAFS), and Ala206. The segment at 317-338 (GDAGVAGTEPDKPGERDGKAGA) is disordered. Basic and acidic residues predominate over residues 325-338 (EPDKPGERDGKAGA).

This sequence belongs to the NAD kinase family. It depends on a divalent metal cation as a cofactor.

It is found in the cytoplasm. It catalyses the reaction NAD(+) + ATP = ADP + NADP(+) + H(+). Functionally, involved in the regulation of the intracellular balance of NAD and NADP, and is a key enzyme in the biosynthesis of NADP. Catalyzes specifically the phosphorylation on 2'-hydroxyl of the adenosine moiety of NAD to yield NADP. In Bifidobacterium longum subsp. infantis (strain ATCC 15697 / DSM 20088 / JCM 1222 / NCTC 11817 / S12), this protein is NAD kinase.